The primary structure comprises 687 residues: Putative mitochondrial carnitine O-acetyltransferase (687 aa).

H346 (proton acceptor) is an active-site residue. 446-459 (GASHIKTVFKCSPD) is a CoA binding site. Residues Y481 and T494 each coordinate (R)-carnitine. Phosphoserine is present on S517.

Belongs to the carnitine/choline acetyltransferase family.

Its subcellular location is the mitochondrion inner membrane. It carries out the reaction (R)-carnitine + acetyl-CoA = O-acetyl-(R)-carnitine + CoA. Functionally, involved in the transfer of acetyl-CoA into mitochondria. May also be involved in the metabolism of acetate and of ethanol. This chain is Putative mitochondrial carnitine O-acetyltransferase (YAT1), found in Saccharomyces cerevisiae (strain ATCC 204508 / S288c) (Baker's yeast).